The primary structure comprises 343 residues: Cytoplasmic tRNA 2-thiolation protein 1 (343 aa).

Belongs to the TtcA family. CTU1/NCS6/ATPBD3 subfamily.

It localises to the cytoplasm. It participates in tRNA modification; 5-methoxycarbonylmethyl-2-thiouridine-tRNA biosynthesis. Functionally, plays a central role in 2-thiolation of mcm(5)S(2)U at tRNA wobble positions of tRNA(Lys), tRNA(Glu) and tRNA(Gln). Directly binds tRNAs and probably acts by catalyzing adenylation of tRNAs, an intermediate required for 2-thiolation. It is unclear whether it acts as a sulfurtransferase that transfers sulfur from thiocarboxylated URM1 onto the uridine of tRNAs at wobble position. The polypeptide is Cytoplasmic tRNA 2-thiolation protein 1 (Drosophila grimshawi (Hawaiian fruit fly)).